We begin with the raw amino-acid sequence, 268 residues long: Malonyl-[acyl-carrier protein] O-methyltransferase 1 (268 aa).

The protein belongs to the methyltransferase superfamily.

The catalysed reaction is malonyl-[ACP] + S-adenosyl-L-methionine = malonyl-[ACP] methyl ester + S-adenosyl-L-homocysteine. Its pathway is cofactor biosynthesis; biotin biosynthesis. Functionally, converts the free carboxyl group of a malonyl-thioester to its methyl ester by transfer of a methyl group from S-adenosyl-L-methionine (SAM). It allows to synthesize pimeloyl-ACP via the fatty acid synthetic pathway. This is Malonyl-[acyl-carrier protein] O-methyltransferase 1 from Ilyobacter polytropus (strain ATCC 51220 / DSM 2926 / LMG 16218 / CuHBu1).